Here is a 247-residue protein sequence, read N- to C-terminus: Mannose-P-dolichol utilization defect 1 protein (247 aa).

The residue at position 2 (Ala2) is an N-acetylalanine. A run of 7 helical transmembrane segments spans residues 37–57 (CLKI…SLLV), 74–94 (LSLQ…VYSI), 100–120 (FSSW…CFLV), 128–145 (VKGV…LALL), 151–171 (LAVV…GKLL), 185–205 (LSAI…FTSV), and 213–233 (MAGV…QVLF). The region spanning 39-105 (KILLSKGLGL…NNFPFSSWGE (67 aa)) is the PQ-loop 1 domain. A PQ-loop 2 domain is found at 159–216 (ASNVPAVVVGKLLQAATNYRNGHTGQLSAITVFMLFGGSLARIFTSVQETGDPLMAGV).

It belongs to the MPDU1 (TC 2.A.43.3) family.

The protein resides in the membrane. Its function is as follows. Required for normal utilization of mannose-dolichol phosphate (Dol-P-Man) in the synthesis of N-linked and O-linked oligosaccharides and GPI anchors. In Mus musculus (Mouse), this protein is Mannose-P-dolichol utilization defect 1 protein (Mpdu1).